The following is a 247-amino-acid chain: Anamorsin homolog (247 aa).

Residues 4–128 are N-terminal SAM-like domain; it reads FKGLQKSLYI…ETGSSARLSF (125 aa). Residues 129–160 form a linker region; it reads AKKNASALNVWKISGDDEELIDEEDLLDEEDK. Residues Cys171, Cys180, Cys183, and Cys185 each coordinate [2Fe-2S] cluster. Residues 171 to 185 are fe-S binding site A; the sequence is CSTTGKRKACKNCSC. [4Fe-4S] cluster contacts are provided by Cys208, Cys211, Cys219, and Cys222. Short sequence motifs (cx2C motif) lie at residues 208–211 and 219–222; these read CGNC and CSTC. The fe-S binding site B stretch occupies residues 208 to 222; that stretch reads CGNCYLGDAFRCSTC.

This sequence belongs to the anamorsin family. In terms of assembly, monomer. [2Fe-2S] cluster is required as a cofactor. Requires [4Fe-4S] cluster as cofactor.

The protein localises to the cytoplasm. It is found in the mitochondrion intermembrane space. Functionally, component of the cytosolic iron-sulfur (Fe-S) protein assembly (CIA) machinery. Required for the maturation of extramitochondrial Fe-S proteins. Part of an electron transfer chain functioning in an early step of cytosolic Fe-S biogenesis, facilitating the de novo assembly of a [4Fe-4S] cluster on the cytosolic Fe-S scaffold complex. Electrons are transferred from NADPH via a FAD- and FMN-containing diflavin oxidoreductase. Together with the diflavin oxidoreductase, also required for the assembly of the diferric tyrosyl radical cofactor of ribonucleotide reductase (RNR), probably by providing electrons for reduction during radical cofactor maturation in the catalytic small subunit. This Drosophila persimilis (Fruit fly) protein is Anamorsin homolog.